The following is a 118-amino-acid chain: Small ribosomal subunit protein uS13 (118 aa).

The disordered stretch occupies residues 97–118 (VRGQRTKTNARTCKGPRKAIKK).

It belongs to the universal ribosomal protein uS13 family. Part of the 30S ribosomal subunit. Forms a loose heterodimer with protein S19. Forms two bridges to the 50S subunit in the 70S ribosome.

Functionally, located at the top of the head of the 30S subunit, it contacts several helices of the 16S rRNA. In the 70S ribosome it contacts the 23S rRNA (bridge B1a) and protein L5 of the 50S subunit (bridge B1b), connecting the 2 subunits; these bridges are implicated in subunit movement. Contacts the tRNAs in the A and P-sites. In Buchnera aphidicola subsp. Schizaphis graminum (strain Sg), this protein is Small ribosomal subunit protein uS13.